The following is a 184-amino-acid chain: Thymidine kinase (184 aa).

Residues 9–16 and 82–85 each bind ATP; these read AAMNSGKS and DEAQ. Glu-83 (proton acceptor) is an active-site residue. The Zn(2+) site is built by Cys-140, Cys-142, Cys-177, and Cys-180.

Belongs to the thymidine kinase family. In terms of assembly, homotetramer.

The protein localises to the cytoplasm. It carries out the reaction thymidine + ATP = dTMP + ADP + H(+). The chain is Thymidine kinase from Chromobacterium violaceum (strain ATCC 12472 / DSM 30191 / JCM 1249 / CCUG 213 / NBRC 12614 / NCIMB 9131 / NCTC 9757 / MK).